Here is a 640-residue protein sequence, read N- to C-terminus: Threonine--tRNA ligase (640 aa).

A TGS domain is found at 1-61 (MPIITLPDGS…DHDATLQIIT (61 aa)). Positions 242–533 (DHRKLGKRLD…LIEHYEGAFP (292 aa)) are catalytic. Residues Cys-333, His-384, and His-510 each coordinate Zn(2+).

The protein belongs to the class-II aminoacyl-tRNA synthetase family. In terms of assembly, homodimer. Zn(2+) is required as a cofactor.

The protein resides in the cytoplasm. The catalysed reaction is tRNA(Thr) + L-threonine + ATP = L-threonyl-tRNA(Thr) + AMP + diphosphate + H(+). Functionally, catalyzes the attachment of threonine to tRNA(Thr) in a two-step reaction: L-threonine is first activated by ATP to form Thr-AMP and then transferred to the acceptor end of tRNA(Thr). Also edits incorrectly charged L-seryl-tRNA(Thr). The polypeptide is Threonine--tRNA ligase (Azotobacter vinelandii (strain DJ / ATCC BAA-1303)).